Here is a 199-residue protein sequence, read N- to C-terminus: Small ribosomal subunit protein uS4 (199 aa).

One can recognise an S4 RNA-binding domain in the interval 91–154 (SRLDNLVYRM…RGLQLIKDAL (64 aa)).

The protein belongs to the universal ribosomal protein uS4 family. As to quaternary structure, part of the 30S ribosomal subunit. Contacts protein S5. The interaction surface between S4 and S5 is involved in control of translational fidelity.

Its function is as follows. One of the primary rRNA binding proteins, it binds directly to 16S rRNA where it nucleates assembly of the body of the 30S subunit. In terms of biological role, with S5 and S12 plays an important role in translational accuracy. The protein is Small ribosomal subunit protein uS4 of Brevibacillus brevis (strain 47 / JCM 6285 / NBRC 100599).